The primary structure comprises 157 residues: MEGCAVRRGSCPLLPGPSAWRASPAGWAGRAKLRSWCRASGLPNRPYTLTGGRHGSVSLLRHPGTTTFVQQRSLHQSWEKRIVFSACPVSRSWCPERNFSGSIPAVTPPKLPGHSKSEGPPGKVRKRTTIRSQPLFVTRTRGFGSAVGWLPLGSPVL.

Residues 104–127 (PAVTPPKLPGHSKSEGPPGKVRKR) form a disordered region.

This is Protein FAM218A (FAM218A) from Homo sapiens (Human).